Consider the following 228-residue polypeptide: Protein GrpE (228 aa).

Basic and acidic residues predominate over residues 1–22 (MDDKQKTNEEVKASSFDSEKSS). A disordered region spans residues 1 to 71 (MDDKQKTNEE…DQTNTNNNEL (71 aa)). The segment covering 38–53 (QNVQHDNGSNPAQKQN) has biased composition (polar residues).

The protein belongs to the GrpE family. Homodimer.

The protein localises to the cytoplasm. In terms of biological role, participates actively in the response to hyperosmotic and heat shock by preventing the aggregation of stress-denatured proteins, in association with DnaK and GrpE. It is the nucleotide exchange factor for DnaK and may function as a thermosensor. Unfolded proteins bind initially to DnaJ; upon interaction with the DnaJ-bound protein, DnaK hydrolyzes its bound ATP, resulting in the formation of a stable complex. GrpE releases ADP from DnaK; ATP binding to DnaK triggers the release of the substrate protein, thus completing the reaction cycle. Several rounds of ATP-dependent interactions between DnaJ, DnaK and GrpE are required for fully efficient folding. The chain is Protein GrpE from Coprothermobacter proteolyticus (strain ATCC 35245 / DSM 5265 / OCM 4 / BT).